The primary structure comprises 627 residues: tRNA uridine 5-carboxymethylaminomethyl modification enzyme MnmG (627 aa).

FAD contacts are provided by residues 13 to 18 (GGGHAG), V125, and S180. Residue 274–288 (GPRYCPSIEDKVVRF) coordinates NAD(+). Residue Q371 coordinates FAD.

It belongs to the MnmG family. As to quaternary structure, homodimer. Heterotetramer of two MnmE and two MnmG subunits. The cofactor is FAD.

It localises to the cytoplasm. Functionally, NAD-binding protein involved in the addition of a carboxymethylaminomethyl (cmnm) group at the wobble position (U34) of certain tRNAs, forming tRNA-cmnm(5)s(2)U34. This is tRNA uridine 5-carboxymethylaminomethyl modification enzyme MnmG from Francisella tularensis subsp. novicida (strain U112).